The primary structure comprises 312 residues: DNA-directed RNA polymerase subunit alpha (312 aa).

Positions 1–229 (MLQYQIDRIE…ELFQPLATVT (229 aa)) are alpha N-terminal domain (alpha-NTD). The alpha C-terminal domain (alpha-CTD) stretch occupies residues 245–312 (QIPLEELNLS…ISIPQSRTSA (68 aa)).

It belongs to the RNA polymerase alpha chain family. As to quaternary structure, in cyanobacteria the RNAP catalytic core is composed of 2 alpha, 1 beta, 1 beta', 1 gamma and 1 omega subunit. When a sigma factor is associated with the core the holoenzyme is formed, which can initiate transcription.

It carries out the reaction RNA(n) + a ribonucleoside 5'-triphosphate = RNA(n+1) + diphosphate. DNA-dependent RNA polymerase catalyzes the transcription of DNA into RNA using the four ribonucleoside triphosphates as substrates. The protein is DNA-directed RNA polymerase subunit alpha of Prochlorococcus marinus (strain MIT 9313).